Reading from the N-terminus, the 147-residue chain is 3-dehydroquinate dehydratase (147 aa).

Catalysis depends on Y25, which acts as the Proton acceptor. N76, H82, and D89 together coordinate substrate. Catalysis depends on H102, which acts as the Proton donor. Residues 103–104 (LS) and R113 contribute to the substrate site.

The protein belongs to the type-II 3-dehydroquinase family. In terms of assembly, homododecamer.

It carries out the reaction 3-dehydroquinate = 3-dehydroshikimate + H2O. It participates in metabolic intermediate biosynthesis; chorismate biosynthesis; chorismate from D-erythrose 4-phosphate and phosphoenolpyruvate: step 3/7. In terms of biological role, catalyzes a trans-dehydration via an enolate intermediate. The polypeptide is 3-dehydroquinate dehydratase (Nostoc sp. (strain PCC 7120 / SAG 25.82 / UTEX 2576)).